The sequence spans 160 residues: MTKKKAHKPGSATIAQNKRARFEYAIEEEFEAGLSLQGWEVKSLRAGKANISDSYVTFRDGEAYLFGATVSPLNVASSHVVCDPTRTRKLLLKKRELDSLLGRVNRDGYTVVALSMYWKNAWAKIKIGVAKGKKEHDKRDDIKDREWQTAKSRIMKHANR.

Residues 138–148 show a composition bias toward basic and acidic residues; the sequence is KRDDIKDREWQ. A disordered region spans residues 138-160; it reads KRDDIKDREWQTAKSRIMKHANR.

Belongs to the SmpB family.

The protein resides in the cytoplasm. Its function is as follows. Required for rescue of stalled ribosomes mediated by trans-translation. Binds to transfer-messenger RNA (tmRNA), required for stable association of tmRNA with ribosomes. tmRNA and SmpB together mimic tRNA shape, replacing the anticodon stem-loop with SmpB. tmRNA is encoded by the ssrA gene; the 2 termini fold to resemble tRNA(Ala) and it encodes a 'tag peptide', a short internal open reading frame. During trans-translation Ala-aminoacylated tmRNA acts like a tRNA, entering the A-site of stalled ribosomes, displacing the stalled mRNA. The ribosome then switches to translate the ORF on the tmRNA; the nascent peptide is terminated with the 'tag peptide' encoded by the tmRNA and targeted for degradation. The ribosome is freed to recommence translation, which seems to be the essential function of trans-translation. The polypeptide is SsrA-binding protein (Serratia proteamaculans (strain 568)).